A 161-amino-acid chain; its full sequence is Phosphopantetheine adenylyltransferase (161 aa).

Residue threonine 9 coordinates substrate. ATP-binding positions include 9 to 10 (TF) and histidine 17. Substrate is bound by residues lysine 41, leucine 73, and arginine 87. Residues 88 to 90 (GLR), glutamate 98, and 123 to 129 (YQFISGT) contribute to the ATP site.

Belongs to the bacterial CoaD family. As to quaternary structure, homohexamer. Mg(2+) serves as cofactor.

The protein resides in the cytoplasm. It catalyses the reaction (R)-4'-phosphopantetheine + ATP + H(+) = 3'-dephospho-CoA + diphosphate. The protein operates within cofactor biosynthesis; coenzyme A biosynthesis; CoA from (R)-pantothenate: step 4/5. Functionally, reversibly transfers an adenylyl group from ATP to 4'-phosphopantetheine, yielding dephospho-CoA (dPCoA) and pyrophosphate. This Cupriavidus necator (strain ATCC 17699 / DSM 428 / KCTC 22496 / NCIMB 10442 / H16 / Stanier 337) (Ralstonia eutropha) protein is Phosphopantetheine adenylyltransferase.